The primary structure comprises 341 residues: GDT1-like protein 1, chloroplastic (341 aa).

Residues 1–13 show a composition bias toward low complexity; the sequence is MASVASSTVFASS. Disordered stretches follow at residues 1–41 and 54–76; these read MASV…GRSV and VVTRASDEEGPPEPAGQGRGGGR. The transit peptide at 1 to 57 directs the protein to the chloroplast; sequence MASVASSTVFASSLPHHRATTRAPPTPPRIPRRARLPGRSVVSCLPKRGSEKLVVTR. The next 7 helical transmembrane spans lie at 79-99, 117-137, 158-178, 203-223, 246-266, 286-306, and 318-338; these read PSLDASSCGLALAAAAGVLML, VVGDLGDISTGFASAFLLIFF, AIIFLGTFGALAVMTIISVVL, FLAACLLVYYGVTTLLDAASG, GAGIISAASTIASTFVLVFIA, LGVIAGSLAGHAVATLIAVLG, and IVAYIGGSLFLAFAAVTLVEI.

This sequence belongs to the GDT1 family.

The protein resides in the plastid. The protein localises to the chloroplast membrane. The chain is GDT1-like protein 1, chloroplastic from Oryza sativa subsp. indica (Rice).